A 293-amino-acid polypeptide reads, in one-letter code: NAD kinase (293 aa).

Residue D72 is the Proton acceptor of the active site. NAD(+) is bound by residues 72-73, 146-147, R157, K174, D176, 187-192, and Q247; these read DG, ND, and TAYALS.

Belongs to the NAD kinase family. A divalent metal cation is required as a cofactor.

Its subcellular location is the cytoplasm. It carries out the reaction NAD(+) + ATP = ADP + NADP(+) + H(+). Involved in the regulation of the intracellular balance of NAD and NADP, and is a key enzyme in the biosynthesis of NADP. Catalyzes specifically the phosphorylation on 2'-hydroxyl of the adenosine moiety of NAD to yield NADP. The polypeptide is NAD kinase (Marinomonas sp. (strain MWYL1)).